A 493-amino-acid polypeptide reads, in one-letter code: Cyclin-dependent kinase-like 2 (493 aa).

Positions Tyr4 to Phe287 constitute a Protein kinase domain. ATP-binding positions include Val10–Val18 and Lys33. Residues Lys45–Glu51 carry the [NKR]KIAxRE motif. Asp126 (proton acceptor) is an active-site residue. Disordered stretches follow at residues Val311–Val338 and Gly363–Ser384. The segment covering Arg320–Thr336 has biased composition (basic and acidic residues).

The protein belongs to the protein kinase superfamily. CMGC Ser/Thr protein kinase family. CDC2/CDKX subfamily.

Its subcellular location is the cytoplasm. It is found in the nucleus. The catalysed reaction is L-seryl-[protein] + ATP = O-phospho-L-seryl-[protein] + ADP + H(+). The enzyme catalyses L-threonyl-[protein] + ATP = O-phospho-L-threonyl-[protein] + ADP + H(+). The protein is Cyclin-dependent kinase-like 2 of Pongo abelii (Sumatran orangutan).